We begin with the raw amino-acid sequence, 139 residues long: Acidic phospholipase A2 S1E6-c (139 aa).

The first 16 residues, 1–16 (MRTLWILAVLLVGVEG), serve as a signal peptide directing secretion. Disulfide bonds link cysteine 42/cysteine 132, cysteine 44/cysteine 60, cysteine 59/cysteine 111, cysteine 65/cysteine 139, cysteine 66/cysteine 104, cysteine 73/cysteine 97, and cysteine 91/cysteine 102. Tyrosine 43, glycine 45, and glycine 47 together coordinate Ca(2+). The active site involves histidine 63. Residue aspartate 64 coordinates Ca(2+). Aspartate 105 is a catalytic residue.

The protein belongs to the phospholipase A2 family. Group II subfamily. D49 sub-subfamily. In terms of assembly, homodimer. Ca(2+) is required as a cofactor. In terms of tissue distribution, expressed by the venom gland.

The protein resides in the secreted. The catalysed reaction is a 1,2-diacyl-sn-glycero-3-phosphocholine + H2O = a 1-acyl-sn-glycero-3-phosphocholine + a fatty acid + H(+). Snake venom phospholipase A2 (PLA2) that inhibits ADP-induced platelet aggregation. PLA2 catalyzes the calcium-dependent hydrolysis of the 2-acyl groups in 3-sn-phosphoglycerides. This Calloselasma rhodostoma (Malayan pit viper) protein is Acidic phospholipase A2 S1E6-c.